The chain runs to 166 residues: Plastocyanin, chloroplastic (166 aa).

The N-terminal 67 residues, 1-67 (MASLTSAAVT…GAVLASNALA (67 aa)), are a transit peptide targeting the chloroplast. The Plastocyanin-like domain maps to 68–166 (VEVLLGGSDG…AGMAGKITVN (99 aa)). Cu cation contacts are provided by H104, C151, H154, and M159.

The protein belongs to the plastocyanin family. Cu(2+) serves as cofactor.

The protein resides in the plastid. It localises to the chloroplast thylakoid membrane. Functionally, participates in electron transfer between P700 and the cytochrome b6-f complex in photosystem I. The chain is Plastocyanin, chloroplastic (PETE) from Fritillaria agrestis (Stinkbells).